Consider the following 727-residue polypeptide: Glycerol-3-phosphate dehydrogenase, mitochondrial (727 aa).

Residues 1–42 (MAFQKAVKGTILVGGGALATVLGLSQFAHYRRKQMNLAYVKA) constitute a mitochondrion transit peptide. 71–99 (DILVIGGGATGSGCALDAVTRGLKTALVE) provides a ligand contact to FAD. Tyrosine 601 is modified (phosphotyrosine). EF-hand domains follow at residues 623–658 (SDID…INVQ) and 659–694 (MDEN…IQKG). Residues aspartate 672, asparagine 674, asparagine 676, glutamine 678, and glutamate 683 each contribute to the Ca(2+) site.

Belongs to the FAD-dependent glycerol-3-phosphate dehydrogenase family. It depends on FAD as a cofactor.

The protein resides in the mitochondrion. The enzyme catalyses a quinone + sn-glycerol 3-phosphate = dihydroxyacetone phosphate + a quinol. The protein operates within polyol metabolism; glycerol degradation via glycerol kinase pathway; glycerone phosphate from sn-glycerol 3-phosphate (anaerobic route): step 1/1. With respect to regulation, calcium-binding enhance the activity of the enzyme. In terms of biological role, calcium-responsive mitochondrial glycerol-3-phosphate dehydrogenase which seems to be a key component of the pancreatic beta-cell glucose-sensing device. The sequence is that of Glycerol-3-phosphate dehydrogenase, mitochondrial from Homo sapiens (Human).